Here is a 415-residue protein sequence, read N- to C-terminus: Dynein assembly factor with WD repeat domains 1 (415 aa).

8 WD repeats span residues 90–129 (AHILPLTNVAFNKSGSSFITGSYDRTCKVWDTASGEELHT), 132–174 (GHRN…HTFR), 175–214 (GHTAEIVCLVFNPQSTLIATGSMDTTAKLWDIQSGEEALT), 217–256 (GHAAEIISLSFNTTGDRLITGSFDHTVSVWEIPSGRRIHT), 259–298 (GHRGEISSAQFNWDCSLIATASMDKSCKLWDSLNGKCVAT), 301–340 (GHDDEVLDVTFDSTGQLVATASADGTARVYSASSRKCLAK), 343–384 (GHEG…QVLK), and 386–415 (HTDEIFSCAFNYEGNTIITGSKDNTCRIWR).

Belongs to the WD repeat WDR69 family.

The protein localises to the cytoplasm. Its subcellular location is the cytoskeleton. It is found in the flagellum basal body. It localises to the flagellum axoneme. In terms of biological role, required for axonemal dynein assembly and ciliary motility in ciliated organs, including Kupffer's vesicle, during embryogenesis. Facilitates the onset of robust cilia motility during development. In Xenopus laevis (African clawed frog), this protein is Dynein assembly factor with WD repeat domains 1 (daw1).